A 215-amino-acid chain; its full sequence is Cytokinin riboside 5'-monophosphate phosphoribohydrolase LOG3 (215 aa).

Substrate contacts are provided by residues glutamate 84, arginine 102–lysine 103, glycine 119–glutamate 125, and threonine 131.

This sequence belongs to the LOG family. In terms of tissue distribution, expressed in roots and shoots. Detected in root procambium, lateral root primordia, vascular tissues of immature leaves, axillary buds, style and ovular funiculus.

Its subcellular location is the cytoplasm. It is found in the nucleus. The catalysed reaction is N(6)-(dimethylallyl)adenosine 5'-phosphate + H2O = N(6)-dimethylallyladenine + D-ribose 5-phosphate. It carries out the reaction 9-ribosyl-trans-zeatin 5'-phosphate + H2O = trans-zeatin + D-ribose 5-phosphate. In terms of biological role, cytokinin-activating enzyme working in the direct activation pathway. Phosphoribohydrolase that converts inactive cytokinin nucleotides to the biologically active free-base forms. The polypeptide is Cytokinin riboside 5'-monophosphate phosphoribohydrolase LOG3 (LOG3) (Arabidopsis thaliana (Mouse-ear cress)).